The following is a 238-amino-acid chain: Ribonuclease PH (238 aa).

Phosphate-binding positions include Arg86 and 124–126; that span reads GTR.

Belongs to the RNase PH family. As to quaternary structure, homohexameric ring arranged as a trimer of dimers.

It catalyses the reaction tRNA(n+1) + phosphate = tRNA(n) + a ribonucleoside 5'-diphosphate. Its function is as follows. Phosphorolytic 3'-5' exoribonuclease that plays an important role in tRNA 3'-end maturation. Removes nucleotide residues following the 3'-CCA terminus of tRNAs; can also add nucleotides to the ends of RNA molecules by using nucleoside diphosphates as substrates, but this may not be physiologically important. Probably plays a role in initiation of 16S rRNA degradation (leading to ribosome degradation) during starvation. The chain is Ribonuclease PH from Solibacter usitatus (strain Ellin6076).